Here is a 188-residue protein sequence, read N- to C-terminus: dCTP deaminase (188 aa).

DCTP-binding positions include 111–116, 135–137, Q156, Y170, and Q180; these read KSTYAR and TLE. E137 acts as the Proton donor/acceptor in catalysis.

The protein belongs to the dCTP deaminase family. As to quaternary structure, homotrimer.

It catalyses the reaction dCTP + H2O + H(+) = dUTP + NH4(+). Its pathway is pyrimidine metabolism; dUMP biosynthesis; dUMP from dCTP (dUTP route): step 1/2. Catalyzes the deamination of dCTP to dUTP. The chain is dCTP deaminase from Pseudomonas putida (strain W619).